The following is a 147-amino-acid chain: Hemoglobin subunit delta (147 aa).

The Globin domain maps to 3 to 147; sequence HLTPDEKNAV…VATALAHKYH (145 aa). At S51 the chain carries Phosphoserine. Residues H64 and H93 each coordinate heme b.

The protein belongs to the globin family. Heterotetramer of two delta chains and two alpha chains. As to expression, red blood cells.

In Otolemur crassicaudatus (Brown greater galago), this protein is Hemoglobin subunit delta (HBD).